The following is a 238-amino-acid chain: MTSRLFALIPCAGTGSRSGAAMPKQYRTVAGRDMLHYSLAAFDACSEFAQTLVVIAPDDAHFDGRRFGGLRFAVRRSGGASRQASVLNGLHALAEFGARDDDWVLVHDAARPGITPALIRTLIGALKDDPVGGIMALPVADTLKRIDATSSDGRIARTEARDGLWQAQTPQMFRIGMLREAILRAQADGHDLTDEASAIEWLGHAPKLVQGSLRNFKVTYPEDFDLAEAILSRPAAAS.

It belongs to the IspD/TarI cytidylyltransferase family. IspD subfamily.

It catalyses the reaction 2-C-methyl-D-erythritol 4-phosphate + CTP + H(+) = 4-CDP-2-C-methyl-D-erythritol + diphosphate. The protein operates within isoprenoid biosynthesis; isopentenyl diphosphate biosynthesis via DXP pathway; isopentenyl diphosphate from 1-deoxy-D-xylulose 5-phosphate: step 2/6. Its function is as follows. Catalyzes the formation of 4-diphosphocytidyl-2-C-methyl-D-erythritol from CTP and 2-C-methyl-D-erythritol 4-phosphate (MEP). The sequence is that of 2-C-methyl-D-erythritol 4-phosphate cytidylyltransferase from Paraburkholderia phytofirmans (strain DSM 17436 / LMG 22146 / PsJN) (Burkholderia phytofirmans).